The sequence spans 105 residues: Prothymosin alpha-A (105 aa).

Basic and acidic residues predominate over residues 1–30 (MADTKVDTSKEVSAKDLKEKKQVEEAENGK). A disordered region spans residues 1-105 (MADTKVDTSK…VDPKKQKTDV (105 aa)). 2 stretches are compositionally biased toward acidic residues: residues 39–78 (ENEE…EEAE) and 87–96 (EDDDDDEDDV).

This sequence belongs to the pro/parathymosin family. As to expression, at the 20-somite stage (18 hpf), expressed on the dorsal side of the embryo in the developing central and peripheral nervous system (CNS and PNS), in the tail bud and the pronephric ducts. In the PNS, expressed in the otic vesicle, trigeminal ganglion and the anterior lateral line placode. Localized throughout the hindbrain, with highest expression in rhombomeres 3 and 4. In the head, expressed in the olfactory placode and in the diencephalic region. At the end of the segmentation period (20 hpf), expression begins in the newly forming endodermal pouches, and weakly in the pharyngeal arch precursor cells. During the early pharyngula period, expressed in the pectoral fin bud, the developing retina, and still present in the central nervous system and endodermal pouches. In the tail, expressed in the spinal cord and posterior lateral line precursors. Weakly expressed in the pronephric ducts, only in the corpuscles of Stanius. At 48 hpf, still expressed in the retina and brain, where expression is almost uniform. At this stage, expression is decreased in the spinal cord and is absent from the lateral line cells and pronephric ducts, but appears in the intestine and continues in the pharyngeal arches. In 72 hpf embryos, expression in the brain remains uniform but is restricted to amacrine cells in the retina. In the pharyngeal arches, expression continues to be limited to the ectodermal and endodermal covering cells.

It localises to the nucleus. This Danio rerio (Zebrafish) protein is Prothymosin alpha-A (ptmaa).